We begin with the raw amino-acid sequence, 164 residues long: Putative pre-16S rRNA nuclease (164 aa).

This sequence belongs to the YqgF nuclease family.

The protein resides in the cytoplasm. Could be a nuclease involved in processing of the 5'-end of pre-16S rRNA. This Synechococcus sp. (strain CC9902) protein is Putative pre-16S rRNA nuclease.